The primary structure comprises 304 residues: UDP-3-O-acyl-N-acetylglucosamine deacetylase (304 aa).

His-78, His-237, and Asp-241 together coordinate Zn(2+). The active-site Proton donor is the His-264.

The protein belongs to the LpxC family. Zn(2+) serves as cofactor.

It carries out the reaction a UDP-3-O-[(3R)-3-hydroxyacyl]-N-acetyl-alpha-D-glucosamine + H2O = a UDP-3-O-[(3R)-3-hydroxyacyl]-alpha-D-glucosamine + acetate. The protein operates within glycolipid biosynthesis; lipid IV(A) biosynthesis; lipid IV(A) from (3R)-3-hydroxytetradecanoyl-[acyl-carrier-protein] and UDP-N-acetyl-alpha-D-glucosamine: step 2/6. Its function is as follows. Catalyzes the hydrolysis of UDP-3-O-myristoyl-N-acetylglucosamine to form UDP-3-O-myristoylglucosamine and acetate, the committed step in lipid A biosynthesis. This chain is UDP-3-O-acyl-N-acetylglucosamine deacetylase, found in Polynucleobacter necessarius subsp. necessarius (strain STIR1).